A 235-amino-acid polypeptide reads, in one-letter code: Large ribosomal subunit protein bL25 (235 aa).

Disordered regions lie at residues 1 to 21 (MADNIINAQRREEKGKGPARR) and 210 to 235 (APAAGAAPAAGGEAAKKAPEAKGAKK). Over residues 210-222 (APAAGAAPAAGGE) the composition is skewed to low complexity. Positions 223–235 (AAKKAPEAKGAKK) are enriched in basic and acidic residues.

Belongs to the bacterial ribosomal protein bL25 family. CTC subfamily. Part of the 50S ribosomal subunit; part of the 5S rRNA/L5/L18/L25 subcomplex. Contacts the 5S rRNA. Binds to the 5S rRNA independently of L5 and L18.

This is one of the proteins that binds to the 5S RNA in the ribosome where it forms part of the central protuberance. The chain is Large ribosomal subunit protein bL25 from Anaeromyxobacter sp. (strain Fw109-5).